The chain runs to 298 residues: 4-hydroxy-tetrahydrodipicolinate synthase (298 aa).

Thr-51 contacts pyruvate. The active-site Proton donor/acceptor is Tyr-139. Lys-167 (schiff-base intermediate with substrate) is an active-site residue. Residue Ile-209 coordinates pyruvate.

This sequence belongs to the DapA family. As to quaternary structure, homotetramer; dimer of dimers.

The protein localises to the cytoplasm. It catalyses the reaction L-aspartate 4-semialdehyde + pyruvate = (2S,4S)-4-hydroxy-2,3,4,5-tetrahydrodipicolinate + H2O + H(+). Its pathway is amino-acid biosynthesis; L-lysine biosynthesis via DAP pathway; (S)-tetrahydrodipicolinate from L-aspartate: step 3/4. Its function is as follows. Catalyzes the condensation of (S)-aspartate-beta-semialdehyde [(S)-ASA] and pyruvate to 4-hydroxy-tetrahydrodipicolinate (HTPA). The protein is 4-hydroxy-tetrahydrodipicolinate synthase of Haemophilus influenzae (strain 86-028NP).